The primary structure comprises 872 residues: MNSFSNLPAENLTIAVNMTKTLPTAVMHGFNSTNDPPSMSITRLFPALLECFGIVLCGYIAGRANVITSTQAKGLGNFVSRFALPALLFKNMVVLNFSNVDWSFLYSILIAKASVFFIVCVLTLLVASPDSRFSKAGLFPIFATQSNDFALGYPIVEALYQTTYPEYLQYIYLVAPISLMMLNPIGFIFCEIQKWKDTQNASQNKIKIVGLGLLRVLQNPIVFMVFIGIAFNFILDRKVPVYVENFLDGLGNSFSGSALFYLGLTMVGKIKRLKKSAFVVLILLITAKLLVLPLLCREMVELLDKGDSVVNHTSLSNYAFLYGVFPVAPGVAIFATQFNMEVEIITSGMVISTFVSAPIMYVSAWLLTFPTMDPKPLAYAIQNVSFDISIVSLISLIWSQAILLLSKKYKQLPHMLTTNLLIAQSIVCAGMMIWNFVKEKNFVGQILVFVLLYSSLYSTYLWTGLLAISLFLLKKRERVQIPVGIIIISGWGIPALLVGVLLITGKHSGDSIDSAFFYGKEQMITTAVTLFCSILIAGISLMCMNRTAQAGSYEGFDQSQSHKVVEPGNTAFEEGPAPVNEPELFTSSIPETSCCSCSMGNGELHCPSIEPIANTSTSEPVIPSFEKNNHCVSRCNSQSCILAQEEEQYLQSGDQQLTRHVLLCLLLIIGLFANLSSCLWWLFNQEPGRLYVELQFFCAVFNFGQGFISFGIFGLDKHLIILPFKRRLEFLWNNKETAENRDSPVSEEIKMTCQQFIHYHRDLCIRNIVKERRCGAKTSAGTFCGCDLVNWLIEVGLASDRGEAVIYGDRLVQGGVIQHITNEYEFRDEYLFYRFLQKSPEQSPPVINANTLQQERYKEIEHSSPPSHSPKT.

The Lumenal segment spans residues 1–40 (MNSFSNLPAENLTIAVNMTKTLPTAVMHGFNSTNDPPSMS). The PIN-like transporter stretch occupies residues 3 to 372 (SFSNLPAENL…SAWLLTFPTM (370 aa)). Asparagine 11, asparagine 17, and asparagine 31 each carry an N-linked (GlcNAc...) asparagine glycan. A helical membrane pass occupies residues 41-61 (ITRLFPALLECFGIVLCGYIA). Cholesterol is bound by residues phenylalanine 45 and tyrosine 59. Residues 62–81 (GRANVITSTQAKGLGNFVSR) lie on the Cytoplasmic side of the membrane. A helical membrane pass occupies residues 82-102 (FALPALLFKNMVVLNFSNVDW). Over 103–106 (SFLY) the chain is Lumenal. A helical transmembrane segment spans residues 107 to 127 (SILIAKASVFFIVCVLTLLVA). Topologically, residues 128 to 135 (SPDSRFSK) are cytoplasmic. A discontinuously helical transmembrane segment spans residues 136 to 156 (AGLFPIFATQSNDFALGYPIV). Residues 157–169 (EALYQTTYPEYLQ) are Lumenal-facing. A helical transmembrane segment spans residues 170 to 190 (YIYLVAPISLMMLNPIGFIFC). Over 191–215 (EIQKWKDTQNASQNKIKIVGLGLLR) the chain is Cytoplasmic. A discontinuously helical membrane pass occupies residues 216 to 236 (VLQNPIVFMVFIGIAFNFILD). Over 237-245 (RKVPVYVEN) the chain is Lumenal. A discontinuously helical membrane pass occupies residues 246–266 (FLDGLGNSFSGSALFYLGLTM). At 267–275 (VGKIKRLKK) the chain is on the cytoplasmic side. The cholesterol site is built by glycine 268, lysine 269, and isoleucine 270. The helical transmembrane segment at 276 to 296 (SAFVVLILLITAKLLVLPLLC) threads the bilayer. Residues 297–317 (REMVELLDKGDSVVNHTSLSN) are Lumenal-facing. Residue asparagine 311 is glycosylated (N-linked (GlcNAc...) asparagine). The discontinuously helical transmembrane segment at 318-338 (YAFLYGVFPVAPGVAIFATQF) threads the bilayer. The Cytoplasmic portion of the chain corresponds to 339–348 (NMEVEIITSG). A helical membrane pass occupies residues 349–369 (MVISTFVSAPIMYVSAWLLTF). Topologically, residues 370–383 (PTMDPKPLAYAIQN) are lumenal. Residues 382-719 (QNVSFDISIV…FGIFGLDKHL (338 aa)) form a GPCR region. Residue asparagine 383 is glycosylated (N-linked (GlcNAc...) asparagine). A helical membrane pass occupies residues 384–404 (VSFDISIVSLISLIWSQAILL). The Cytoplasmic portion of the chain corresponds to 405 to 416 (LSKKYKQLPHML). Residues 417-437 (TTNLLIAQSIVCAGMMIWNFV) form a helical membrane-spanning segment. Residues 438 to 440 (KEK) are Lumenal-facing. The chain crosses the membrane as a helical span at residues 441–461 (NFVGQILVFVLLYSSLYSTYL). Residues 462-482 (WTGLLAISLFLLKKRERVQIP) are Cytoplasmic-facing. A helical membrane pass occupies residues 483-503 (VGIIIISGWGIPALLVGVLLI). The Lumenal portion of the chain corresponds to 504–522 (TGKHSGDSIDSAFFYGKEQ). Residues 523–543 (MITTAVTLFCSILIAGISLMC) form a helical membrane-spanning segment. Residues 544–662 (MNRTAQAGSY…GDQQLTRHVL (119 aa)) lie on the Cytoplasmic side of the membrane. Arginine 659 contacts cholesterol. Residues 663–683 (LCLLLIIGLFANLSSCLWWLF) traverse the membrane as a helical segment. Residues 684-693 (NQEPGRLYVE) lie on the Lumenal side of the membrane. A helical membrane pass occupies residues 694-714 (LQFFCAVFNFGQGFISFGIFG). Residues 715–872 (LDKHLIILPF…SSPPSHSPKT (158 aa)) lie on the Cytoplasmic side of the membrane. Residues 759-837 (YHRDLCIRNI…DEYLFYRFLQ (79 aa)) enclose the DEP domain.

As to quaternary structure, homodimer; via the transporter region and DEP domain. Interacts with the GATOR1 complex; preventing interaction between GATOR1 and KICSTOR; interaction is disrupted upon cholesterol starvation.

Its subcellular location is the lysosome membrane. Functionally, cholesterol-binding protein that acts as a regulator of mTORC1 signaling pathway. Acts as a sensor of cholesterol to signal cholesterol sufficiency to mTORC1: in presence of cholesterol, binds cholesterol, leading to disruption of the interaction between the GATOR1 and KICSTOR complexes and promotion of mTORC1 signaling. Upon cholesterol starvation, GPR155/LYCHOS is unable to perturb the association between GATOR1 and KICSTOR, leading to mTORC1 signaling inhibition. Binds indole-3-acetic acid and may play a role in tryptophan metabolism. The sequence is that of Lysosomal cholesterol signaling protein (GPR155) from Pongo abelii (Sumatran orangutan).